Here is an 867-residue protein sequence, read N- to C-terminus: Nuclear cap-binding protein subunit 1 (867 aa).

Residues 9-228 (LLRIGDRCPE…DLWERIQVLS (220 aa)) form the MIF4G domain. The interval 752–797 (SADGDVPNLRAGDPNVNSSARDPEATTMEIDNENGGDNDSQLNGQN) is disordered. The segment covering 788-797 (DNDSQLNGQN) has biased composition (polar residues).

This sequence belongs to the NCBP1 family. In terms of assembly, component of the nuclear cap-binding complex (CBC), a heterodimer composed of ABH1/CBP80 and CBP20 that interacts with m7GpppG-capped RNA.

Its subcellular location is the nucleus. It localises to the cytoplasm. Its function is as follows. Component of the cap-binding complex (CBC), which binds cotranscriptionally to the 5'-cap of pre-mRNAs and is involved in various processes such as pre-mRNA splicing and RNA-mediated gene silencing (RNAi) by microRNAs (miRNAs). The CBC complex is involved in miRNA-mediated RNA interference and is required for primary miRNA processing. In the CBC complex, ABH1/CBP80 does not bind directly capped RNAs (m7GpppG-capped RNA) but is required to stabilize the movement of the N-terminal loop of CBP20 and lock the CBC into a high affinity cap-binding state with the cap structure. This is Nuclear cap-binding protein subunit 1 (ABH1) from Oryza sativa subsp. japonica (Rice).